A 773-amino-acid polypeptide reads, in one-letter code: ATP-dependent zinc metalloprotease YME1L1 (773 aa).

Over M1 to L295 the chain is Mitochondrial matrix. The helical transmembrane segment at I296–V316 threads the bilayer. Over R317–R773 the chain is Mitochondrial intermembrane. Positions 341, 383, 384, 385, 386, and 387 each coordinate ATP. A Zn(2+)-binding site is contributed by H599. E600 is an active-site residue. H603 and D677 together coordinate Zn(2+).

It in the N-terminal section; belongs to the AAA ATPase family. The protein in the C-terminal section; belongs to the peptidase M41 family. Homohexamer; may also form heterohexamers. Exists in several complexes of 600-1100 kDa. Interacts with AFG1L. Zn(2+) is required as a cofactor. Proteolytically processed by mitochondrial processing peptidase (MPP) to generate the mature form. Degraded in an OMA1-dependent manner in response to oxidative stress. High expression in cardiac and skeletal muscle mitochondria.

The protein resides in the mitochondrion inner membrane. It is found in the mitochondrion. The catalysed reaction is ATP + H2O = ADP + phosphate + H(+). In terms of biological role, ATP-dependent metalloprotease that catalyzes the degradation of folded and unfolded proteins with a suitable degron sequence in the mitochondrial intermembrane region. Plays an important role in regulating mitochondrial morphology and function by cleaving OPA1 at position S2, giving rise to a form of OPA1 that promotes maintenance of normal mitochondrial structure and mitochondrial protein metabolism. Ensures cell proliferation, maintains normal cristae morphology and complex I respiration activity, promotes antiapoptotic activity and protects mitochondria from the accumulation of oxidatively damaged membrane proteins. Required to control the accumulation of nonassembled respiratory chain subunits (NDUFB6, OX4 and ND1). Involved in the mitochondrial adaptation in response to various signals, such as stress or developmental cues, by mediating degradation of mitochondrial proteins to rewire the mitochondrial proteome. Catalyzes degradation of mitochondrial proteins, such as translocases, lipid transfer proteins and metabolic enzymes in response to nutrient starvation in order to limit mitochondrial biogenesis: mechanistically, YME1L is activated by decreased phosphatidylethanolamine levels caused by LPIN1 activity in response to mTORC1 inhibition. Acts as a regulator of adult neural stem cell self-renewal by promoting mitochondrial proteome rewiring, preserving neural stem and progenitor cells self-renewal. Required for normal, constitutive degradation of PRELID1. Catalyzes the degradation of OMA1 in response to membrane depolarization. Mediates degradation of TIMM17A downstream of the integrated stress response (ISR). Catalyzes degradation of MICU1 when MICU1 is not assembled via an interchain disulfide. This Homo sapiens (Human) protein is ATP-dependent zinc metalloprotease YME1L1 (YME1L1).